We begin with the raw amino-acid sequence, 515 residues long: Bifunctional purine biosynthesis protein PurH (515 aa).

Positions Met1–Val145 constitute an MGS-like domain.

It belongs to the PurH family.

It carries out the reaction (6R)-10-formyltetrahydrofolate + 5-amino-1-(5-phospho-beta-D-ribosyl)imidazole-4-carboxamide = 5-formamido-1-(5-phospho-D-ribosyl)imidazole-4-carboxamide + (6S)-5,6,7,8-tetrahydrofolate. The enzyme catalyses IMP + H2O = 5-formamido-1-(5-phospho-D-ribosyl)imidazole-4-carboxamide. Its pathway is purine metabolism; IMP biosynthesis via de novo pathway; 5-formamido-1-(5-phospho-D-ribosyl)imidazole-4-carboxamide from 5-amino-1-(5-phospho-D-ribosyl)imidazole-4-carboxamide (10-formyl THF route): step 1/1. It functions in the pathway purine metabolism; IMP biosynthesis via de novo pathway; IMP from 5-formamido-1-(5-phospho-D-ribosyl)imidazole-4-carboxamide: step 1/1. This chain is Bifunctional purine biosynthesis protein PurH, found in Streptococcus pyogenes serotype M12 (strain MGAS2096).